A 689-amino-acid chain; its full sequence is Glycine--tRNA ligase beta subunit (689 aa).

Belongs to the class-II aminoacyl-tRNA synthetase family. Tetramer of two alpha and two beta subunits.

The protein resides in the cytoplasm. The enzyme catalyses tRNA(Gly) + glycine + ATP = glycyl-tRNA(Gly) + AMP + diphosphate. The protein is Glycine--tRNA ligase beta subunit of Salmonella schwarzengrund (strain CVM19633).